We begin with the raw amino-acid sequence, 106 residues long: Thiosulfate sulfurtransferase GlpE (106 aa).

The Rhodanese domain occupies 17–105; the sequence is QLPSVCLADI…WRHVYPYTAT (89 aa). Cysteine 65 functions as the Cysteine persulfide intermediate in the catalytic mechanism.

This sequence belongs to the GlpE family.

Its subcellular location is the cytoplasm. The enzyme catalyses thiosulfate + hydrogen cyanide = thiocyanate + sulfite + 2 H(+). The catalysed reaction is thiosulfate + [thioredoxin]-dithiol = [thioredoxin]-disulfide + hydrogen sulfide + sulfite + 2 H(+). Transferase that catalyzes the transfer of sulfur from thiosulfate to thiophilic acceptors such as cyanide or dithiols. May function in a CysM-independent thiosulfate assimilation pathway by catalyzing the conversion of thiosulfate to sulfite, which can then be used for L-cysteine biosynthesis. The protein is Thiosulfate sulfurtransferase GlpE of Tolumonas auensis (strain DSM 9187 / NBRC 110442 / TA 4).